The chain runs to 162 residues: MNETVDLIEMKIPAKPEYVGIIRLTLSGVASRMGYVYEEIEDLKIAVSEACTNAVQHAYKGKDGEDGEVAVRFLVYEDRLEIIVADKGGSFDFKQKQEDLGPYTTAHTVDQLAEGGLGLYLMQTLMDEVEVQANSGVTVAMTKFLNRERVDHDTTIQNYETN.

This sequence belongs to the anti-sigma-factor family.

The catalysed reaction is L-seryl-[protein] + ATP = O-phospho-L-seryl-[protein] + ADP + H(+). It carries out the reaction L-threonyl-[protein] + ATP = O-phospho-L-threonyl-[protein] + ADP + H(+). Functionally, negative regulator of sigma-B activity. Phosphorylates and inactivates its specific antagonist protein, RsbV. Upon phosphorylation of RsbV, RsbW is released and binds to sigma-B, thereby blocking its ability to form an RNA polymerase holoenzyme (E-sigma-B). The sequence is that of Serine-protein kinase RsbW from Bacillus pumilus (strain SAFR-032).